The following is a 148-amino-acid chain: Phospholipase A2-alpha (148 aa).

Positions 1 to 20 (MAAPIILFSFLLFFSVSVSA) are cleaved as a signal peptide. Cystine bridges form between C38/C66, C42/C72, C47/C122, C59/C79, C78/C105, and C85/C98. 3 residues coordinate Ca(2+): Y58, G60, and Y63. H82 is a catalytic residue. A Ca(2+)-binding site is contributed by D83.

It belongs to the phospholipase A2 family. As to quaternary structure, interacts with MYB30. Ca(2+) serves as cofactor. As to expression, ubiquitous but expressed at a low level.

The protein localises to the secreted. It localises to the golgi apparatus. Its subcellular location is the cytoplasmic vesicle. The protein resides in the nucleus. It catalyses the reaction a 1,2-diacyl-sn-glycero-3-phosphocholine + H2O = a 1-acyl-sn-glycero-3-phosphocholine + a fatty acid + H(+). In terms of biological role, PA2 catalyzes the calcium-dependent hydrolysis of the 2-acyl groups in 3-sn-phosphoglycerides. Releases lysophospholipids (LPLs) and free fatty acids (FFAs) from membrane phospholipids in response to hormones and other external stimuli. Modulates the trafficking of PIN proteins to the plasma membrane. Negatively regulates MYB30 transcriptional activity and hypersensitive response control. In Arabidopsis thaliana (Mouse-ear cress), this protein is Phospholipase A2-alpha.